The primary structure comprises 304 residues: Nod factor export ATP-binding protein I (304 aa).

The ABC transporter domain occupies 6–236 (IDFRNVEKRY…EIGCDVIEIY (231 aa)). Residue 38 to 45 (GPNGAGKT) coordinates ATP.

Belongs to the ABC transporter superfamily. Lipooligosaccharide exporter (TC 3.A.1.102) family. As to quaternary structure, the complex is composed of two ATP-binding proteins (NodI) and two transmembrane proteins (NodJ).

The protein resides in the cell inner membrane. Its function is as follows. Part of the ABC transporter complex NodIJ involved in the export of the nodulation factors (Nod factors), the bacterial signal molecules that induce symbiosis and subsequent nodulation induction. Nod factors are LCO (lipo-chitin oligosaccharide), a modified beta-1,4-linked N-acetylglucosamine oligosaccharide. This subunit is responsible for energy coupling to the transport system. The protein is Nod factor export ATP-binding protein I of Burkholderia orbicola (strain AU 1054).